The primary structure comprises 393 residues: MNVSAESGAPRRAGQRHEVGLAQLPPAPPTTVAVIEGLATGTPRRVVNQSDAADRVAELFLDPGQRERIPRVYQKSRITTRRMAVDPLDAKFDVFRREPATIRDRMHLFYEHAVPLAVDVSKRALAGLPYRAAEIGLLVLATSTGFIAPGVDVAIVKELGLSPSISRVVVNFMGCAAAMNALGTATNYVRAHPAMKALVVCIELCSVNAVFADDINDVVIHSLFGDGCAALVIGASQVQEKLEPGKVVVRSSFSQLLDNTEDGIVLGVNHNGITCELSENLPGYIFSGVAPVVTEMLWDNGLQISDIDLWAIHPGGPKIIEQSVRSLGISAELAAQSWDVLARFGNMLSVSLIFVLETMVQQAESAKAISTGVAFAFGPGVTVEGMLFDIIRR.

Residues 1-26 (MNVSAESGAPRRAGQRHEVGLAQLPP) are disordered. The active-site Nucleophile is the C175. H221 is a substrate binding site.

The protein belongs to the thiolase-like superfamily. Chalcone/stilbene synthases family. Homodimer.

Its pathway is lipid metabolism; fatty acid biosynthesis. Involved in the biosynthesis of tri- and tetraketide alpha-pyrones. Pks18 catalyzes the extension of medium- and long-chain aliphatic acyl-CoA substrates by using malonyl-CoA as an extender molecule to synthesize polyketide products. This chain is Alpha-pyrone synthesis polyketide synthase-like Pks18 (pks18), found in Mycobacterium bovis (strain ATCC BAA-935 / AF2122/97).